We begin with the raw amino-acid sequence, 40 residues long: Natriuretic peptide HsNP-b (40 aa).

A propeptide spanning residues 1–8 is cleaved from the precursor; that stretch reads SGSKTAKI. The tract at residues 1–40 is disordered; the sequence is SGSKTAKIGDGCFGVPIDHIGSTTDLGCGRPRPKPTPRGS. A disulfide bond links Cys-12 and Cys-28. Residues 31–40 show a composition bias toward basic residues; sequence PRPKPTPRGS.

It belongs to the natriuretic peptide family. Expressed by the venom gland.

It localises to the secreted. Its function is as follows. Snake venom natriuretic peptide that targets both NPR1 and NPR2. Exhibits hypotensive and vasodepressor activities. The polypeptide is Natriuretic peptide HsNP-b (Hoplocephalus stephensii (Stephens's banded snake)).